The primary structure comprises 367 residues: Dihydroorotate dehydrogenase (quinone) (367 aa).

FMN-binding positions include A67 to K71 and T91. Position 71 (K71) interacts with substrate. N116 to F120 is a binding site for substrate. Positions 145 and 178 each coordinate FMN. N178 provides a ligand contact to substrate. S181 acts as the Nucleophile in catalysis. Residue N183 participates in substrate binding. 2 residues coordinate FMN: K219 and T247. N248–T249 lines the substrate pocket. FMN is bound by residues G269, G298, and Y319–T320.

It belongs to the dihydroorotate dehydrogenase family. Type 2 subfamily. As to quaternary structure, monomer. FMN is required as a cofactor.

It localises to the cell membrane. It carries out the reaction (S)-dihydroorotate + a quinone = orotate + a quinol. It functions in the pathway pyrimidine metabolism; UMP biosynthesis via de novo pathway; orotate from (S)-dihydroorotate (quinone route): step 1/1. Functionally, catalyzes the conversion of dihydroorotate to orotate with quinone as electron acceptor. The polypeptide is Dihydroorotate dehydrogenase (quinone) (Roseiflexus castenholzii (strain DSM 13941 / HLO8)).